A 346-amino-acid polypeptide reads, in one-letter code: Flap endonuclease 1 (346 aa).

Positions 1 to 102 (MGVTELGKLI…LEIEQRKKAK (102 aa)) are N-domain. Mg(2+) contacts are provided by Asp31, Asp84, Glu156, Glu158, Asp177, Asp179, and Asp239. Residues 120–261 (DVAKYAKRAI…KALKLIWEFG (142 aa)) form an I-domain region.

This sequence belongs to the XPG/RAD2 endonuclease family. FEN1 subfamily. As to quaternary structure, interacts with PCNA. PCNA stimulates the nuclease activity without altering cleavage specificity. Mg(2+) serves as cofactor.

Structure-specific nuclease with 5'-flap endonuclease and 5'-3' exonuclease activities involved in DNA replication and repair. During DNA replication, cleaves the 5'-overhanging flap structure that is generated by displacement synthesis when DNA polymerase encounters the 5'-end of a downstream Okazaki fragment. Binds the unpaired 3'-DNA end and kinks the DNA to facilitate 5' cleavage specificity. Cleaves one nucleotide into the double-stranded DNA from the junction in flap DNA, leaving a nick for ligation. Also involved in the base excision repair (BER) pathway. Acts as a genome stabilization factor that prevents flaps from equilibrating into structures that lead to duplications and deletions. Also possesses 5'-3' exonuclease activity on nicked or gapped double-stranded DNA. This chain is Flap endonuclease 1, found in Pyrobaculum calidifontis (strain DSM 21063 / JCM 11548 / VA1).